The primary structure comprises 385 residues: Glucans biosynthesis protein C (385 aa).

Transmembrane regions (helical) follow at residues 17–37 (AWLM…SHTW), 60–80 (MQVF…RYPL), 91–111 (VGIP…IMLQ), 137–157 (ISHL…VWIF), 173–193 (KFSM…YAVI), 212–232 (FIVM…LAFI), 239–259 (LFTT…VAYL), 274–294 (TESV…FSFG), 311–331 (ASLF…AYIT), and 338–358 (WLGF…LYEI).

The protein belongs to the acyltransferase 3 family. OpgC subfamily.

It localises to the cell membrane. It functions in the pathway glycan metabolism; osmoregulated periplasmic glucan (OPG) biosynthesis. Necessary for the succinyl substitution of periplasmic glucans. Could catalyze the transfer of succinyl residues from the cytoplasmic side of the membrane to the nascent glucan backbones on the periplasmic side of the membrane. This Shigella dysenteriae serotype 1 (strain Sd197) protein is Glucans biosynthesis protein C.